The sequence spans 525 residues: Vanin-like protein 2 (525 aa).

The first 27 residues, 1-27 (MAKNYWGFFLFCLALGLMLNLSQQASL), serve as a signal peptide directing secretion. Asn20 and Asn61 each carry an N-linked (GlcNAc...) asparagine glycan. A CN hydrolase domain is found at 33 to 303 (YTAGVVEFEP…RSIYVARVPK (271 aa)). The active-site Proton acceptor is Glu72. N-linked (GlcNAc...) asparagine glycosylation is found at Asn99, Asn116, and Asn124. Lys167 acts as the Proton donor in catalysis. Asn176 is a glycosylation site (N-linked (GlcNAc...) asparagine). The Nucleophile role is filled by Cys199. Asn333, Asn348, and Asn375 each carry an N-linked (GlcNAc...) asparagine glycan.

It belongs to the carbon-nitrogen hydrolase superfamily. BTD/VNN family. As to expression, expressed in third instar larvae.

The protein localises to the secreted. The chain is Vanin-like protein 2 from Drosophila melanogaster (Fruit fly).